The sequence spans 356 residues: Protein trichome birefringence-like 41 (356 aa).

A helical; Signal-anchor for type II membrane protein transmembrane segment spans residues 12 to 31; that stretch reads SALVLSLLLLLLLPLLHEAA. The GDS motif motif lies at 107 to 109; it reads GDS. A DCXHWCLPGXXDXWN motif motif is present at residues 333 to 347; sequence DCSHWCLSGVPDTWN.

It belongs to the PC-esterase family. TBL subfamily.

It is found in the membrane. Functionally, may act as a bridging protein that binds pectin and other cell wall polysaccharides. Probably involved in maintaining esterification of pectins. May be involved in the specific O-acetylation of cell wall polymers. The chain is Protein trichome birefringence-like 41 (TBL41) from Arabidopsis thaliana (Mouse-ear cress).